The chain runs to 509 residues: Scavenger receptor class B member 1 (509 aa).

Over methionine 1–alanine 11 the chain is Cytoplasmic. The helical transmembrane segment at leucine 12–valine 32 threads the bilayer. Residues proline 33–valine 440 are Extracellular-facing. 11 N-linked (GlcNAc...) asparagine glycosylation sites follow: asparagine 102, asparagine 108, asparagine 116, asparagine 173, asparagine 212, asparagine 227, asparagine 255, asparagine 288, asparagine 310, asparagine 330, and asparagine 383. The cysteines at positions 251 and 384 are disulfide-linked. Residues leucine 441–isoleucine 461 form a helical membrane-spanning segment. A lipid anchor (S-palmitoyl cysteine) is attached at cysteine 462. Residues cysteine 462–leucine 509 are Cytoplasmic-facing.

This sequence belongs to the CD36 family. In terms of assembly, the C-terminal region binds to PDZK1. In terms of processing, N-glycosylated. Post-translationally, the six cysteines of the extracellular domain are all involved in intramolecular disulfide bonds. In terms of tissue distribution, expressed primarily in liver, ovary and adrenal gland, and, at lower levels in other non-placental steroidogenic tissues, including adipose tissue, mammary gland and testis (at protein level). Isoform 2 is expressed at lower levels than isoform 1 in liver, testis and adrenal gland. At the mRNA, but not at the protein level, isoform 2 is the predominant isoform in testis (80%).

The protein localises to the cell membrane. The protein resides in the membrane. It is found in the caveola. Functionally, receptor for different ligands such as phospholipids, cholesterol ester, lipoproteins, phosphatidylserine and apoptotic cells. Both isoform 1 and isoform 2 act as receptors for HDL, mediating selective uptake of cholesteryl ether and HDL-dependent cholesterol efflux. Also facilitates the flux of free and esterified cholesterol between the cell surface and apoB-containing lipoproteins and modified lipoproteins, although less efficiently than HDL. May be involved in the phagocytosis of apoptotic cells, via its phosphatidylserine binding activity. The protein is Scavenger receptor class B member 1 (Scarb1) of Mus musculus (Mouse).